The primary structure comprises 526 residues: Cytochrome P450 52A5 (526 aa).

A helical membrane pass occupies residues 18-38; it reads WYVIVPLAIIIYKVFDYFYVL. Cys473 lines the heme pocket.

This sequence belongs to the cytochrome P450 family. Heme is required as a cofactor.

The protein localises to the membrane. Functionally, together with an NADPH cytochrome P450 the enzyme system catalyzes the terminal hydroxylation as the first step in the assimilation of alkanes and fatty acids. The chain is Cytochrome P450 52A5 (CYP52A5) from Candida maltosa (Yeast).